The chain runs to 453 residues: Bifunctional protein GlmU (453 aa).

Residues 1–225 (MNIVILAAGT…EWETLGVNSK (225 aa)) form a pyrophosphorylase region. UDP-N-acetyl-alpha-D-glucosamine is bound by residues 6–9 (LAAG), K20, Q71, 76–77 (GT), 98–100 (YGD), G135, E150, N165, and N223. Residue D100 coordinates Mg(2+). N223 lines the Mg(2+) pocket. The linker stretch occupies residues 226–246 (AQLAELERIHQRNIAEALLVD). The interval 247-453 (GVTLADPARL…GYVRPVKKKS (207 aa)) is N-acetyltransferase. Positions 329 and 347 each coordinate UDP-N-acetyl-alpha-D-glucosamine. H359 (proton acceptor) is an active-site residue. UDP-N-acetyl-alpha-D-glucosamine is bound by residues Y362 and N373. Acetyl-CoA contacts are provided by residues A376, 382-383 (NY), S401, and A419.

This sequence in the N-terminal section; belongs to the N-acetylglucosamine-1-phosphate uridyltransferase family. It in the C-terminal section; belongs to the transferase hexapeptide repeat family. In terms of assembly, homotrimer. Requires Mg(2+) as cofactor.

Its subcellular location is the cytoplasm. It carries out the reaction alpha-D-glucosamine 1-phosphate + acetyl-CoA = N-acetyl-alpha-D-glucosamine 1-phosphate + CoA + H(+). It catalyses the reaction N-acetyl-alpha-D-glucosamine 1-phosphate + UTP + H(+) = UDP-N-acetyl-alpha-D-glucosamine + diphosphate. Its pathway is nucleotide-sugar biosynthesis; UDP-N-acetyl-alpha-D-glucosamine biosynthesis; N-acetyl-alpha-D-glucosamine 1-phosphate from alpha-D-glucosamine 6-phosphate (route II): step 2/2. The protein operates within nucleotide-sugar biosynthesis; UDP-N-acetyl-alpha-D-glucosamine biosynthesis; UDP-N-acetyl-alpha-D-glucosamine from N-acetyl-alpha-D-glucosamine 1-phosphate: step 1/1. It participates in bacterial outer membrane biogenesis; LPS lipid A biosynthesis. In terms of biological role, catalyzes the last two sequential reactions in the de novo biosynthetic pathway for UDP-N-acetylglucosamine (UDP-GlcNAc). The C-terminal domain catalyzes the transfer of acetyl group from acetyl coenzyme A to glucosamine-1-phosphate (GlcN-1-P) to produce N-acetylglucosamine-1-phosphate (GlcNAc-1-P), which is converted into UDP-GlcNAc by the transfer of uridine 5-monophosphate (from uridine 5-triphosphate), a reaction catalyzed by the N-terminal domain. This is Bifunctional protein GlmU from Burkholderia lata (strain ATCC 17760 / DSM 23089 / LMG 22485 / NCIMB 9086 / R18194 / 383).